We begin with the raw amino-acid sequence, 127 residues long: MNEKVRLLKIRAKIKRKKPKFLRQEWWRFPKFKNDPKWRKPKGTDSKMRVKLKGKARSPSIGWSSPKAVRGLHPSGYEEVLVYNVKDLELIDSKRQAARIAATVGKKKRIMIIERARELGIKVLNAR.

The segment covering 37-48 has biased composition (basic and acidic residues); that stretch reads KWRKPKGTDSKM. The tract at residues 37–65 is disordered; the sequence is KWRKPKGTDSKMRVKLKGKARSPSIGWSS.

It belongs to the eukaryotic ribosomal protein eL32 family.

This Thermococcus sibiricus (strain DSM 12597 / MM 739) protein is Large ribosomal subunit protein eL32.